A 695-amino-acid chain; its full sequence is Polyribonucleotide nucleotidyltransferase (695 aa).

Mg(2+) is bound by residues Asp488 and Asp494. One can recognise a KH domain in the interval 554 to 613 (PKTAVIKIQTDKIRDLIGKGGETIKGIISTSSASVDVDDNGNVNIFSNDQKSFDTAMQMV). The S1 motif domain maps to 623–690 (GKVYTGKVVK…DRGRIKLSRK (68 aa)).

It belongs to the polyribonucleotide nucleotidyltransferase family. As to quaternary structure, component of the RNA degradosome, which is a multiprotein complex involved in RNA processing and mRNA degradation. It depends on Mg(2+) as a cofactor.

The protein localises to the cytoplasm. It catalyses the reaction RNA(n+1) + phosphate = RNA(n) + a ribonucleoside 5'-diphosphate. In terms of biological role, involved in mRNA degradation. Catalyzes the phosphorolysis of single-stranded polyribonucleotides processively in the 3'- to 5'-direction. The sequence is that of Polyribonucleotide nucleotidyltransferase from Ruthia magnifica subsp. Calyptogena magnifica.